A 409-amino-acid chain; its full sequence is Peptidase T (409 aa).

Histidine 78 is a Zn(2+) binding site. Residue aspartate 80 is part of the active site. Aspartate 140 is a Zn(2+) binding site. Glutamate 173 (proton acceptor) is an active-site residue. The Zn(2+) site is built by glutamate 174, aspartate 196, and histidine 379.

Belongs to the peptidase M20B family. Zn(2+) is required as a cofactor.

It is found in the cytoplasm. The enzyme catalyses Release of the N-terminal residue from a tripeptide.. Cleaves the N-terminal amino acid of tripeptides. This is Peptidase T from Salmonella heidelberg (strain SL476).